Reading from the N-terminus, the 344-residue chain is Anthranilate phosphoribosyltransferase (344 aa).

Residues Gly81, 84–85 (GD), Ser89, 91–94 (NIST), 109–117 (KHGNRALSS), and Ala121 each bind 5-phospho-alpha-D-ribose 1-diphosphate. Anthranilate is bound at residue Gly81. Ser93 lines the Mg(2+) pocket. Residue Asn112 participates in anthranilate binding. An anthranilate-binding site is contributed by Arg167. Residues Asp226 and Glu227 each contribute to the Mg(2+) site.

The protein belongs to the anthranilate phosphoribosyltransferase family. Homodimer. Mg(2+) is required as a cofactor.

It carries out the reaction N-(5-phospho-beta-D-ribosyl)anthranilate + diphosphate = 5-phospho-alpha-D-ribose 1-diphosphate + anthranilate. The protein operates within amino-acid biosynthesis; L-tryptophan biosynthesis; L-tryptophan from chorismate: step 2/5. Functionally, catalyzes the transfer of the phosphoribosyl group of 5-phosphorylribose-1-pyrophosphate (PRPP) to anthranilate to yield N-(5'-phosphoribosyl)-anthranilate (PRA). This chain is Anthranilate phosphoribosyltransferase, found in Azorhizobium caulinodans (strain ATCC 43989 / DSM 5975 / JCM 20966 / LMG 6465 / NBRC 14845 / NCIMB 13405 / ORS 571).